Here is a 570-residue protein sequence, read N- to C-terminus: Endo-1,4-beta-xylanase 5-like (570 aa).

A signal peptide spans methionine 1 to glycine 23. Residues asparagine 197, asparagine 261, and asparagine 307 are each glycosylated (N-linked (GlcNAc...) asparagine). The GH10 domain maps to lysine 202–leucine 501. The active-site Proton donor is the glutamate 332. Asparagine 346 is a glycosylation site (N-linked (GlcNAc...) asparagine). The Nucleophile role is filled by glutamate 439. 4 N-linked (GlcNAc...) asparagine glycosylation sites follow: asparagine 490, asparagine 515, asparagine 537, and asparagine 545.

Belongs to the glycosyl hydrolase 10 (cellulase F) family.

It carries out the reaction Endohydrolysis of (1-&gt;4)-beta-D-xylosidic linkages in xylans.. Its pathway is glycan degradation; xylan degradation. Binds to and hydrolyzes insoluble and soluble xylan substrates. The chain is Endo-1,4-beta-xylanase 5-like from Arabidopsis thaliana (Mouse-ear cress).